Here is a 698-residue protein sequence, read N- to C-terminus: MDWAIKAARKKTQRKPGSTRSIIETLDDLNNLTTDAHSEINQRLYESSEWLRNNVYMNTLKYEDKKMEESLISPENTHNKMDVEFPKMKGEYELSNSQNDAAKDVTKTPRNGLHNDKSITPKSLRRKEVTEGMNRFSIHDTNKSPVEPLNSVKVDANESEKSSPWSPYKVEKVLRESSKTSESPINTKRFDNQTWAAKEEMENEPILQALKKAESVKVKPPPNSGIARSQRRSNMFVPLPNKDPLIIQHIPPTKSSGSIPKVRTVKESPIAFKKKSTINSPAIRAVENSDTAGSTKASSVFDRLSSIPTKSFENKISRGNVGHKYSSSSIDLTGSPMKKVSQKFKSINSTDTDMQEALRDIFSVKNKITKNNSPKGKNSRKSSIPRFDKTSLKLTTHKKLAIIAEQKKKSKHSSDVHKTGSRPHSISPTKISVDSSSPSKEVKNYYQSPVRGYLRPTKASISPNKNKNLTTSQTPHRLKIKEKTLRKLSPNIADISKPESRKSKNYRLTNLQLLPPAEAERDDLKKKFDKRLSGIMRSQQEHHRRKQEKQKRMSHLEQDLKKQTSFSNDYKDIRLKESLAPFDNHVRDTINKNTAFSTDNILATINTVDHREIIGNVTPKIASVNDSLPEINTDSEDEASVTLAAWAKSPYLQEQLIRQQDINPQTIFGPIPPLHTDEIFPNPRLNRLKPRQIVPKRS.

Phosphoserine is present on serine 268. 3 disordered regions span residues 365–390 (KNKITKNNSPKGKNSRKSSIPRFDKT), 405–444 (EQKKKSKHSSDVHKTGSRPHSISPTKISVDSSSPSKEVKN), and 455–474 (RPTKASISPNKNKNLTTSQT). 2 stretches are compositionally biased toward polar residues: residues 422-439 (RPHSISPTKISVDSSSPS) and 459-474 (ASISPNKNKNLTTSQT). Serine 489 is modified (phosphoserine). A disordered region spans residues 535–560 (IMRSQQEHHRRKQEKQKRMSHLEQDL). Over residues 550–560 (QKRMSHLEQDL) the composition is skewed to basic and acidic residues.

Belongs to the INCENP family. In terms of assembly, component of the CPC complex at least composed of IPL1, BIR1 and SLI15. In terms of processing, phosphorylated by serine/threonine protein kinase IPL1.

It is found in the nucleus. It localises to the cytoplasm. The protein localises to the cytoskeleton. The protein resides in the spindle. Its subcellular location is the chromosome. It is found in the centromere. It localises to the kinetochore. Its function is as follows. Component of the chromosomal passenger complex (CPC), a complex that acts as a key regulator of mitosis. Stimulates IPL1 kinase activity and facilitates its association with the mitotic spindle. Has a role in attaching the kinetochores to the microtubules and ensuring that sister kinetochores connect to opposite poles. This Saccharomyces cerevisiae (strain ATCC 204508 / S288c) (Baker's yeast) protein is Inner centromere protein SLI15 (SLI15).